The following is a 374-amino-acid chain: UDP-N-acetylglucosamine--N-acetylmuramyl-(pentapeptide) pyrophosphoryl-undecaprenol N-acetylglucosamine transferase (374 aa).

UDP-N-acetyl-alpha-D-glucosamine is bound by residues 13 to 15 (TGG), Asn124, Arg165, Ser193, and Gln294.

It belongs to the glycosyltransferase 28 family. MurG subfamily.

It is found in the cell inner membrane. It catalyses the reaction di-trans,octa-cis-undecaprenyl diphospho-N-acetyl-alpha-D-muramoyl-L-alanyl-D-glutamyl-meso-2,6-diaminopimeloyl-D-alanyl-D-alanine + UDP-N-acetyl-alpha-D-glucosamine = di-trans,octa-cis-undecaprenyl diphospho-[N-acetyl-alpha-D-glucosaminyl-(1-&gt;4)]-N-acetyl-alpha-D-muramoyl-L-alanyl-D-glutamyl-meso-2,6-diaminopimeloyl-D-alanyl-D-alanine + UDP + H(+). It functions in the pathway cell wall biogenesis; peptidoglycan biosynthesis. Functionally, cell wall formation. Catalyzes the transfer of a GlcNAc subunit on undecaprenyl-pyrophosphoryl-MurNAc-pentapeptide (lipid intermediate I) to form undecaprenyl-pyrophosphoryl-MurNAc-(pentapeptide)GlcNAc (lipid intermediate II). In Rhizobium rhizogenes (strain K84 / ATCC BAA-868) (Agrobacterium radiobacter), this protein is UDP-N-acetylglucosamine--N-acetylmuramyl-(pentapeptide) pyrophosphoryl-undecaprenol N-acetylglucosamine transferase.